The primary structure comprises 501 residues: Protein DETOXIFICATION 37 (501 aa).

Transmembrane regions (helical) follow at residues 44–64 (MMIE…VYVI), 84–104 (LAAA…LLLG), 134–154 (VVLI…NPIL), 163–183 (VATL…AYAV), 200–220 (SAYI…IAVY), 222–242 (LGYG…IIVV), 280–300 (AVML…AGLL), 310–330 (LAIC…FNAA), 352–372 (VVTT…VLSW), 396–416 (FLAI…VAVG), 422–442 (FVAY…GFVL), and 453–473 (IWTG…IVTL).

The protein belongs to the multi antimicrobial extrusion (MATE) (TC 2.A.66.1) family.

The protein resides in the membrane. This chain is Protein DETOXIFICATION 37, found in Arabidopsis thaliana (Mouse-ear cress).